The primary structure comprises 99 residues: Aspartyl/glutamyl-tRNA(Asn/Gln) amidotransferase subunit C (99 aa).

Belongs to the GatC family. As to quaternary structure, heterotrimer of A, B and C subunits.

The catalysed reaction is L-glutamyl-tRNA(Gln) + L-glutamine + ATP + H2O = L-glutaminyl-tRNA(Gln) + L-glutamate + ADP + phosphate + H(+). It catalyses the reaction L-aspartyl-tRNA(Asn) + L-glutamine + ATP + H2O = L-asparaginyl-tRNA(Asn) + L-glutamate + ADP + phosphate + 2 H(+). Functionally, allows the formation of correctly charged Asn-tRNA(Asn) or Gln-tRNA(Gln) through the transamidation of misacylated Asp-tRNA(Asn) or Glu-tRNA(Gln) in organisms which lack either or both of asparaginyl-tRNA or glutaminyl-tRNA synthetases. The reaction takes place in the presence of glutamine and ATP through an activated phospho-Asp-tRNA(Asn) or phospho-Glu-tRNA(Gln). In Burkholderia vietnamiensis (strain G4 / LMG 22486) (Burkholderia cepacia (strain R1808)), this protein is Aspartyl/glutamyl-tRNA(Asn/Gln) amidotransferase subunit C.